Consider the following 131-residue polypeptide: Profilin-1 (131 aa).

It belongs to the profilin family. As to quaternary structure, occurs in many kinds of cells as a complex with monomeric actin in a 1:1 ratio.

It localises to the cytoplasm. The protein resides in the cytoskeleton. Its function is as follows. Binds to actin and affects the structure of the cytoskeleton. At high concentrations, profilin prevents the polymerization of actin, whereas it enhances it at low concentrations. By binding to PIP2, it inhibits the formation of IP3 and DG. This Triticum aestivum (Wheat) protein is Profilin-1 (PRO1).